Here is a 370-residue protein sequence, read N- to C-terminus: MYKIFFRLVFKRMDPERAHYAAFRWIRLAARIPVLRTFVAAALAPRHKELRTEALGLRMHGPFGLAAGFDKNAIAIDGMAMLGFDHVEIGTVTGEPQPGNPKKRLFRLVADRALINRMGFNNEGSAAVAARLAARNPVFRTTVGVNIGKTKVVPEDEAAADYVKSTERLAAHADYLVVNVSSPNTPGLRNLQATESLRPLLTAVREAADRTVTTRRVPLLVKIAPDLADEDVDAVADLAVELGLDGVIATNTTVAREGLGLKSHPDLVGEAGGLSGAPLKDRSLEVLSRLYARVGDRITLVGVGGVENAEDAWQRILAGATLVQGYSAFIYEGPAYARAIHQGLAARLAASPYATLAEAVGAETRKQAAA.

FMN is bound by residues 67-71 (AGFDK) and threonine 91. Residue lysine 71 coordinates substrate. 116 to 120 (NRMGF) lines the substrate pocket. Residues asparagine 146 and asparagine 179 each coordinate FMN. Asparagine 179 is a substrate binding site. Residue serine 182 is the Nucleophile of the active site. Residue asparagine 184 participates in substrate binding. 2 residues coordinate FMN: lysine 222 and threonine 250. 251–252 (NT) contacts substrate. FMN is bound by residues glycine 276, glycine 305, and 326–327 (YS).

It belongs to the dihydroorotate dehydrogenase family. Type 2 subfamily. As to quaternary structure, monomer. FMN is required as a cofactor.

The protein resides in the cell membrane. The catalysed reaction is (S)-dihydroorotate + a quinone = orotate + a quinol. It functions in the pathway pyrimidine metabolism; UMP biosynthesis via de novo pathway; orotate from (S)-dihydroorotate (quinone route): step 1/1. Its function is as follows. Catalyzes the conversion of dihydroorotate to orotate with quinone as electron acceptor. This is Dihydroorotate dehydrogenase (quinone) from Streptomyces griseus subsp. griseus (strain JCM 4626 / CBS 651.72 / NBRC 13350 / KCC S-0626 / ISP 5235).